The following is a 316-amino-acid chain: Acetyl-coenzyme A carboxylase carboxyl transferase subunit alpha (316 aa).

Residues 40 to 290 (KARKELQRIY…RERFAHHLQE (251 aa)) enclose the CoA carboxyltransferase C-terminal domain.

The protein belongs to the AccA family. In terms of assembly, acetyl-CoA carboxylase is a heterohexamer composed of biotin carboxyl carrier protein (AccB), biotin carboxylase (AccC) and two subunits each of ACCase subunit alpha (AccA) and ACCase subunit beta (AccD).

The protein resides in the cytoplasm. It carries out the reaction N(6)-carboxybiotinyl-L-lysyl-[protein] + acetyl-CoA = N(6)-biotinyl-L-lysyl-[protein] + malonyl-CoA. It participates in lipid metabolism; malonyl-CoA biosynthesis; malonyl-CoA from acetyl-CoA: step 1/1. Functionally, component of the acetyl coenzyme A carboxylase (ACC) complex. First, biotin carboxylase catalyzes the carboxylation of biotin on its carrier protein (BCCP) and then the CO(2) group is transferred by the carboxyltransferase to acetyl-CoA to form malonyl-CoA. The protein is Acetyl-coenzyme A carboxylase carboxyl transferase subunit alpha of Acidithiobacillus ferrooxidans (strain ATCC 23270 / DSM 14882 / CIP 104768 / NCIMB 8455) (Ferrobacillus ferrooxidans (strain ATCC 23270)).